Reading from the N-terminus, the 92-residue chain is Small ribosomal subunit protein bS20 (92 aa).

Residues 1–22 (MANSPQSKKRARQAEARAAVNK) are disordered.

It belongs to the bacterial ribosomal protein bS20 family.

Functionally, binds directly to 16S ribosomal RNA. This is Small ribosomal subunit protein bS20 from Cereibacter sphaeroides (strain ATCC 17029 / ATH 2.4.9) (Rhodobacter sphaeroides).